The chain runs to 155 residues: Ribosomal RNA large subunit methyltransferase H 1 (155 aa).

S-adenosyl-L-methionine is bound by residues leucine 76, glycine 108, and 127 to 132 (FSKMTF).

It belongs to the RNA methyltransferase RlmH family. Homodimer.

The protein resides in the cytoplasm. The enzyme catalyses pseudouridine(1915) in 23S rRNA + S-adenosyl-L-methionine = N(3)-methylpseudouridine(1915) in 23S rRNA + S-adenosyl-L-homocysteine + H(+). Specifically methylates the pseudouridine at position 1915 (m3Psi1915) in 23S rRNA. This Thermoanaerobacter pseudethanolicus (strain ATCC 33223 / 39E) (Clostridium thermohydrosulfuricum) protein is Ribosomal RNA large subunit methyltransferase H 1.